The following is a 56-amino-acid chain: Prokaryotic ubiquitin-like protein UBact (56 aa).

Over residues 1–28 (MPQDQQRKKQFDPNPNRDDSQRKTPVDK) the composition is skewed to basic and acidic residues. Positions 1–33 (MPQDQQRKKQFDPNPNRDDSQRKTPVDKEIDDI) are disordered. Gln56 carries the deamidated glutamine modification. An Isoglutamyl lysine isopeptide (Gln-Lys) (interchain with K-? in acceptor proteins) cross-link involves residue Gln56.

The protein belongs to the ubiquitin-like protein UBact family. Post-translationally, may be modified by deamidation of its C-terminal glutamine to glutamate by the adjacently encoded deamidase. This could be a prerequisite to the subsequent conjugation, as shown in the other prokaryotic ubiquitin-like protein Pup.

Functionally, may function as a protein modifier covalently attached to lysine residues of substrate proteins. This may serve to target the modified proteins for degradation by proteasomes. The sequence is that of Prokaryotic ubiquitin-like protein UBact from Yanofskybacteria sp. (strain GW2011_GWA1_39_13).